Consider the following 914-residue polypeptide: Probable UDP-N-acetylglucosamine--peptide N-acetylglucosaminyltransferase SPINDLY (914 aa).

The disordered stretch occupies residues 1-39 (MVGLEDDTERERSPVVENGFSNGSRSSSSSAGVLSPSRK). Over residues 19-37 (GFSNGSRSSSSSAGVLSPS) the composition is skewed to low complexity. Position 35 is a phosphoserine (serine 35). TPR repeat units lie at residues 43-76 (GNDT…DSKN), 77-110 (VEAH…DPHN), 112-144 (CALT…DASY), 152-185 (AIVL…DPHY), 186-219 (APAY…RPMY), 220-253 (AEAY…SPNF), 261-294 (AIAL…NWHY), 295-328 (ADAM…NPHC), 329-362 (AEAC…KPNF), 364-396 (QSLN…NPTY), and 397-430 (AEAF…DPDS). The segment at 431–914 (RNAGQNRLLA…QLSKRMDSTS (484 aa)) is catalytic region. Residues 866–914 (PLISKDLGPSRVSVTGEATPSLKANGSAPVPSSLPTQSPQLSKRMDSTS) are disordered. Residues 877-889 (VSVTGEATPSLKA) are compositionally biased toward polar residues. A compositionally biased stretch (low complexity) spans 894-907 (PVPSSLPTQSPQLS).

This sequence belongs to the glycosyltransferase 41 family. O-GlcNAc transferase subfamily. In terms of assembly, homomultimer; via its TPR repeats. Interacts with GI. Interacts with TCP14 and TCP15. Interacts (via N-terminus) with APRR5. Interacts with CPN20. As to expression, widely expressed. Present throughout the plant (at protein level).

It is found in the cytoplasm. Its subcellular location is the nucleus. The catalysed reaction is L-seryl-[protein] + UDP-N-acetyl-alpha-D-glucosamine = 3-O-(N-acetyl-beta-D-glucosaminyl)-L-seryl-[protein] + UDP + H(+). It catalyses the reaction L-threonyl-[protein] + UDP-N-acetyl-alpha-D-glucosamine = 3-O-(N-acetyl-beta-D-glucosaminyl)-L-threonyl-[protein] + UDP + H(+). It carries out the reaction L-seryl-[protein] + GDP-beta-L-fucose = 3-O-(alpha-L-fucosyl)-L-seryl-[protein] + GDP + H(+). The enzyme catalyses L-threonyl-[protein] + GDP-beta-L-fucose = 3-O-(alpha-L-fucosyl)-L-threonyl-[protein] + GDP + H(+). It functions in the pathway protein modification; protein glycosylation. Its function is as follows. Probable O-linked N-acetylglucosamine transferase (OGT) involved in various processes such as gibberellin (GA) signaling pathway and circadian clock. OGTs catalyze the addition of nucleotide-activated sugars directly onto the polypeptide through O-glycosidic linkage with the hydroxyl of serine or threonine. Probably acts by adding O-linked sugars to yet unknown proteins. Acts as a repressor of GA signaling pathway to inhibit hypocotyl elongation. Functions with GIGANTEA (GI) in pathways controlling flowering, circadian cotyledon movements and hypocotyl elongation. Acts as a light-regulated promoter of elongation via its interaction with GI. Acts as an activator of cytokinin signaling. Required with SEC for gamete and seed development. Its OGT activity has been proved in vitro but not in vivo. Possesses O-fucosyltransferase activity on specific serine and threonine residues. Mediates O-fucosylation of the DELLA protein RGA, a repressor of the GA signaling pathway. O-fucosylation enhances RGA activity by promoting RGA binding to key transcription factors in brassinosteroid and light-signaling pathways. Regulates root hair patterning upstream of the transcription factor WER, independently of DELLA proteins and GA signaling. Involved in abscisic acid (ABA) signaling partly through functional ABAR. Mediates O-fucosylation of CPN20 that may depress ABA responses during seed germination and seedling development. Involved in the modulation of the pace of the circadian clock by mediating O-fucosylation of APRR5, one of the core circadian clock components. O-fucosylation promotes APRR5 proteolysis. This chain is Probable UDP-N-acetylglucosamine--peptide N-acetylglucosaminyltransferase SPINDLY, found in Arabidopsis thaliana (Mouse-ear cress).